The chain runs to 298 residues: Thymidylate synthase (298 aa).

DUMP-binding positions include R25 and 159-160; that span reads RR. The active-site Nucleophile is the C179. Residues 200-203, N211, and 241-243 each bind dUMP; these read RSCD and HLY. A (6R)-5,10-methylene-5,6,7,8-tetrahydrofolate-binding site is contributed by D203. A297 contacts (6R)-5,10-methylene-5,6,7,8-tetrahydrofolate.

The protein belongs to the thymidylate synthase family. Bacterial-type ThyA subfamily. In terms of assembly, homodimer.

It localises to the cytoplasm. It carries out the reaction dUMP + (6R)-5,10-methylene-5,6,7,8-tetrahydrofolate = 7,8-dihydrofolate + dTMP. It participates in pyrimidine metabolism; dTTP biosynthesis. Its function is as follows. Catalyzes the reductive methylation of 2'-deoxyuridine-5'-monophosphate (dUMP) to 2'-deoxythymidine-5'-monophosphate (dTMP) while utilizing 5,10-methylenetetrahydrofolate (mTHF) as the methyl donor and reductant in the reaction, yielding dihydrofolate (DHF) as a by-product. This enzymatic reaction provides an intracellular de novo source of dTMP, an essential precursor for DNA biosynthesis. This is Thymidylate synthase from Rhodopseudomonas palustris (strain BisA53).